The following is a 90-amino-acid chain: Small ribosomal subunit protein bS20 (90 aa).

Residues 1–29 are disordered; sequence MANTASAEKRNRQAQKRRARNVQVRTGVK.

Belongs to the bacterial ribosomal protein bS20 family.

Its function is as follows. Binds directly to 16S ribosomal RNA. In Anaeromyxobacter sp. (strain Fw109-5), this protein is Small ribosomal subunit protein bS20.